The primary structure comprises 115 residues: Large ribosomal subunit protein uL23 (115 aa).

It belongs to the universal ribosomal protein uL23 family. Part of the 50S ribosomal subunit. Contacts protein L29, and trigger factor when it is bound to the ribosome.

One of the early assembly proteins it binds 23S rRNA. One of the proteins that surrounds the polypeptide exit tunnel on the outside of the ribosome. Forms the main docking site for trigger factor binding to the ribosome. In Granulibacter bethesdensis (strain ATCC BAA-1260 / CGDNIH1), this protein is Large ribosomal subunit protein uL23.